The following is a 409-amino-acid chain: Tetracenomycin polyketide synthase ketoacyl synthase beta subunit (409 aa).

A Ketosynthase family 3 (KS3) domain is found at 4–407 (PAPVVVTGLG…GFNSALVVRR (404 aa)).

The protein belongs to the thiolase-like superfamily. Beta-ketoacyl-ACP synthases family. The tetracenomycin polyketide synthase (TCM PKS) is composed of a ketosynthase complex (TcmKL), an acyl carrier protein (TcmM), a cyclase (TcmN) and a probable second cyclase (TcmJ). TcmK and TcmL form a heterodimeric complex.

The catalysed reaction is 10 malonyl-CoA + 8 H(+) = tetracenomycin F2 + 10 CO2 + 10 CoA + 2 H2O. The protein operates within antibiotic biosynthesis; tetracenomycin C biosynthesis. Functionally, involved in the biosynthesis of tetracenomycin C (TCM C). Part of a type II polyketide synthase (PKS) that catalyzes the synthesis of tetracenomycin F2 (TCM F2), a precursor of TCM C, from malonyl-CoA. TcmK and TcmL form a heterodimeric alpha-beta complex that catalyzes the condensation reactions between the growing acyl-enzyme chain and the malonyl-CoA extender units. The polypeptide is Tetracenomycin polyketide synthase ketoacyl synthase beta subunit (Streptomyces glaucescens).